A 2598-amino-acid polypeptide reads, in one-letter code: Partially reducing polyketide synthase men1 (2598 aa).

Residues 7-435 (SQSIAIVGLS…GSNAHAILDD (429 aa)) form the Ketosynthase family 3 (KS3) domain. Catalysis depends on for beta-ketoacyl synthase activity residues Cys-181, His-316, and His-358. The segment covering 450–459 (GKSHHHHHQH) has biased composition (basic residues). Disordered regions lie at residues 450 to 490 (GKSH…NGTT) and 537 to 557 (AEKQ…DPEK). The segment covering 474–490 (VNGTSEVNGTSGVNGTT) has biased composition (low complexity). Positions 611–915 (YVFTGQGAQW…RGPVTQILQS (305 aa)) constitute a Malonyl-CoA:ACP transacylase (MAT) domain. The segment at 1008-1151 (LGLIGAPMPN…GSVAVEFGAL (144 aa)) is N-terminal hotdog fold. The region spanning 1008 to 1325 (LGLIGAPMPN…CVEMPSASGM (318 aa)) is the PKS/mFAS DH domain. Residues 1009 to 1323 (GLIGAPMPNF…LVCVEMPSAS (315 aa)) form a dehydratase (DH) domain region. The interval 1169 to 1325 (TISQEVDVFY…CVEMPSASGM (157 aa)) is C-terminal hotdog fold. Positions 1886–2197 (GMLNTLCFEI…ARSRQDKIVI (312 aa)) constitute an Enoyl reductase (ER) domain. The Ketoreductase (KR) domain occupies 2222–2399 (TYLIAGGLGG…AATIDLGIVK (178 aa)). The region spanning 2510-2587 (EAARLVSAAV…AFASDLAKKG (78 aa)) is the Carrier domain. Ser-2547 carries the post-translational modification O-(pantetheine 4'-phosphoryl)serine.

Pantetheine 4'-phosphate is required as a cofactor.

The protein operates within secondary metabolite biosynthesis. Partially reducing polyketide synthase; part of the gene cluster that mediates the biosynthesis of menisporopsin A, a bioactive macrocyclic polylactone. The biosynthesis of menisporopsin A is performed by a reducing (man1) and a non-reducing (men2) polyketide synthase that catalyze the formation of each menisporopsin A subunits, while the esterification and cyclolactonization activities are probably peformed by the unusual thioesterase domain of men2. First, a reduced diketide intermediate, 3-hydroxybutyryl-S-ACP is produced by men1 and transferred to men2; this is followed by a second reduced diketide which is further elongated using 3 units of malonyl-coA to form a reduced pentaketide. The cyclization of this intermediate by the PT domain forms the second subunit, 2,4-dihydroxy-6-(2-hydroxy-n-propyl)benzoyl-S-ACP. The TE domain of men2 then esterifies the secondary hydroxyl group on the side chain of the second subunit with the acyl-TE of the first subunit to form the first ester intermediate. This process occurs iteratively to form a linear tetraester intermediate. The final subunit is formed by a similar process, except that an extra malonyl-CoA is required in an additional elongation step to form a reduced hexaketide intermediate, and the carbonyl group next to the secondary hydroxyl group is reduced by a trans-acting ketoreductase. Again, the PT domain catalyzes cyclization to form the largest subunit, 2,4-dihydroxy-6-(2,4-dihydroxy-n-pentyl) benzoyl-S-ACP. Then the linear pentaester intermediate is formed. In this step, if the intermediate transfer rate is slow, intra- molecular cyclization involving the secondary hydroxyl group of the pentaester intermediate may occur to form menisporopsin B. Alternatively, transfer of the pentaester intermediate to the TE domain would allow cyclolactonization to be catalyzed by the TE to form menisporopsin A. In Menisporopsis theobromae, this protein is Partially reducing polyketide synthase men1.